The primary structure comprises 515 residues: Synaptic vesicular amine transporter (515 aa).

The Cytoplasmic segment spans residues 1 to 20 (MALSDLVLLRWLRDSRHSRK). Residues 21-41 (LILFIVFLALLLDNMLLTVVV) form a helical membrane-spanning segment. The Lumenal, vesicle portion of the chain corresponds to 42-130 (PIIPSYLYSI…EDRDLLNENV (89 aa)). Asparagine 56, asparagine 80, asparagine 81, asparagine 89, and asparagine 111 each carry an N-linked (GlcNAc...) asparagine glycan. Cysteine 118 and cysteine 325 are disulfide-bonded. Residues 131–151 (QVGLLFASKATVQLLTNPFIG) traverse the membrane as a helical segment. Over 152–160 (LLTNRIGYP) the chain is Cytoplasmic. The chain crosses the membrane as a helical span at residues 161–181 (IPMFAGFCIMFISTVMFAFSS). At 182–190 (SYAFLLIAR) the chain is on the lumenal, vesicle side. The helical transmembrane segment at 191 to 211 (SLQGIGSSCSSVAGMGMLASV) threads the bilayer. Over 212-220 (YTDDEERGK) the chain is Cytoplasmic. Residues 221-243 (PMGIALGGLAMGVLVGPPFGSVL) form a helical membrane-spanning segment. Residues leucine 229 and valine 233 each coordinate serotonin. Topologically, residues 244 to 249 (YEFVGK) are lumenal, vesicle. Residues 250-272 (TAPFLVLAALVLLDGAIQLFVLQ) traverse the membrane as a helical segment. Residues 273 to 292 (PSRVQPESQKGTPLTTLLKD) lie on the Cytoplasmic side of the membrane. Residues 293–312 (PYILIAAGSICFANMGIAML) traverse the membrane as a helical segment. Residues asparagine 306, isoleucine 309, glutamate 313, phenylalanine 335, and tyrosine 342 each contribute to the serotonin site. Residues 313–329 (EPALPIWMMETMCSRKW) are Lumenal, vesicle-facing. The helical transmembrane segment at 330–353 (QLGVAFLPASISYLIGTNIFGILA) threads the bilayer. Residues 354 to 358 (HKMGR) are Cytoplasmic-facing. Residues 359–379 (WLCALLGMVIVGISILCIPFA) traverse the membrane as a helical segment. Over 380 to 390 (KNIYGLIAPNF) the chain is Lumenal, vesicle. The helical transmembrane segment at 391–411 (GVGFAIGMVDSSMMPIMGYLV) threads the bilayer. Aspartate 400 serves as a coordination point for serotonin. The Cytoplasmic portion of the chain corresponds to 412–415 (DLRH). Residues 416–436 (VSVYGSVYAIADVAFCMGYAI) traverse the membrane as a helical segment. Tyrosine 434 is a binding site for serotonin. The Lumenal, vesicle portion of the chain corresponds to 437–441 (GPSAG). A helical membrane pass occupies residues 442–463 (GAIAKAIGFPWLMTIIGIIDIA). Topologically, residues 464 to 515 (FAPLCFFLRSPPAKEEKMAILMDHNCPIKRKMYTQNNVQSYPIGDDEESESD) are cytoplasmic. Serine 512 and serine 514 each carry phosphoserine; by CK2.

This sequence belongs to the major facilitator superfamily. Vesicular transporter family. As to quaternary structure, interacts with SLC6A3. Expressed in the substantia nigra and the tuberomammillary nucleus of the posterior hypothalamus. Expressed in stomach, in particular in varicose nerve fibers and enterochromaffin-like cells in the corpus region (at protein level).

It localises to the cytoplasmic vesicle. The protein resides in the secretory vesicle. It is found in the synaptic vesicle membrane. Its subcellular location is the secretory vesicle membrane. The protein localises to the cell projection. It localises to the axon. The protein resides in the dendrite. The enzyme catalyses serotonin(in) + 2 H(+)(out) = serotonin(out) + 2 H(+)(in). It catalyses the reaction dopamine(in) + 2 H(+)(out) = dopamine(out) + 2 H(+)(in). The catalysed reaction is histamine(in) + 2 H(+)(out) = histamine(out) + 2 H(+)(in). Its activity is regulated as follows. Strongly inhibited by reserpine and tetrabenazine. Also inhibited to a lesser extent by ketanserin and fenfluramine. Reserpine and ketanserin inhibit by blocking the substrate-binding pocket. Tetrabenazine traps SLC18A2/VMAT2 in an occluded conformation and its inhibition is specific to SLC18A2/VMAT2 but not SLC18A1/VMAT1. Its function is as follows. Electrogenic antiporter that exchanges one cationic monoamine with two intravesicular protons across the membrane of secretory and synaptic vesicles. Uses the electrochemical proton gradient established by the V-type proton-pump ATPase to accumulate high concentrations of monoamines inside the vesicles prior to their release via exocytosis. Transports a variety of catecholamines such as dopamine, adrenaline and noradrenaline, histamine, and indolamines such as serotonin. Regulates the transvesicular monoaminergic gradient that determines the quantal size. Mediates somatodendritic dopamine release in hippocampal neurons, likely as part of a regulated secretory pathway that integrates retrograde synaptic signals. Acts as a primary transporter for striatal dopamine loading ensuring impulse-dependent release of dopamine at the synaptic cleft. Responsible for histamine and serotonin storage and subsequent corelease from mast cell granules. The chain is Synaptic vesicular amine transporter (Slc18a2) from Rattus norvegicus (Rat).